The following is a 219-amino-acid chain: Uracil-DNA glycosylase (219 aa).

Asp61 acts as the Proton acceptor in catalysis.

The protein belongs to the uracil-DNA glycosylase (UDG) superfamily. UNG family.

The protein resides in the cytoplasm. The catalysed reaction is Hydrolyzes single-stranded DNA or mismatched double-stranded DNA and polynucleotides, releasing free uracil.. Its function is as follows. Excises uracil residues from the DNA which can arise as a result of misincorporation of dUMP residues by DNA polymerase or due to deamination of cytosine. The sequence is that of Uracil-DNA glycosylase from Neisseria gonorrhoeae (strain ATCC 700825 / FA 1090).